A 107-amino-acid chain; its full sequence is Iron-binding protein IscA (107 aa).

3 residues coordinate Fe cation: Cys-35, Cys-99, and Cys-101.

The protein belongs to the HesB/IscA family. In terms of assembly, homodimer; may form tetramers and higher multimers. Requires Fe cation as cofactor.

Is able to transfer iron-sulfur clusters to apo-ferredoxin. Multiple cycles of [2Fe2S] cluster formation and transfer are observed, suggesting that IscA acts catalytically. Recruits intracellular free iron so as to provide iron for the assembly of transient iron-sulfur cluster in IscU in the presence of IscS, L-cysteine and the thioredoxin reductase system TrxA/TrxB. This Pectobacterium atrosepticum (strain SCRI 1043 / ATCC BAA-672) (Erwinia carotovora subsp. atroseptica) protein is Iron-binding protein IscA.